The sequence spans 102 residues: Small ribosomal subunit protein uS10 (102 aa).

The protein belongs to the universal ribosomal protein uS10 family. In terms of assembly, part of the 30S ribosomal subunit.

Functionally, involved in the binding of tRNA to the ribosomes. In Methanosarcina mazei (strain ATCC BAA-159 / DSM 3647 / Goe1 / Go1 / JCM 11833 / OCM 88) (Methanosarcina frisia), this protein is Small ribosomal subunit protein uS10.